The following is a 487-amino-acid chain: Putative KilA-N domain-containing protein L37 (487 aa).

A compositionally biased stretch (basic residues) spans 1–12 (MKVQKSSKKPLK). The tract at residues 1–137 (MKVQKSSKKP…DINSDDDNNL (137 aa)) is disordered. Residues 22–34 (KSGSKSMKSSKSS) are compositionally biased toward low complexity. 2 stretches are compositionally biased toward acidic residues: residues 47–77 (DSEI…ESSD) and 111–136 (VLDD…DDNN). One can recognise a KilA-N domain in the interval 175 to 284 (EISKGIYGTF…HKVSKIVNDY (110 aa)). The stretch at 290 to 338 (FDKHEQLIKGKDDKIAELTRKIDKQTSLMKDQKSTIKEQDKKINELLSK) forms a coiled coil.

The protein is Putative KilA-N domain-containing protein L37 of Acanthamoeba polyphaga mimivirus (APMV).